A 114-amino-acid chain; its full sequence is UPF0342 protein LSL_0473 (114 aa).

It belongs to the UPF0342 family.

This is UPF0342 protein LSL_0473 from Ligilactobacillus salivarius (strain UCC118) (Lactobacillus salivarius).